The sequence spans 242 residues: TLC domain-containing protein 5 (242 aa).

Transmembrane regions (helical) follow at residues 3–23 (LFIV…LLLC), 37–57 (LVTL…GFIA), 74–94 (ILTL…CVYF), 109–129 (IFGI…CAVL), 154–174 (LAGD…RIGV), and 190–210 (LIVK…MVDI). Residues 28–219 (GRDSEWNCRL…IARFACRKTC (192 aa)) enclose the TLC domain.

It belongs to the TLCD5 family.

It localises to the membrane. This is TLC domain-containing protein 5 (tlcd5) from Danio rerio (Zebrafish).